The sequence spans 413 residues: Arginine biosynthesis bifunctional protein ArgJ (413 aa).

Substrate-binding residues include Thr-163, Lys-189, Thr-200, Glu-286, Asn-408, and Thr-413. Thr-200 (nucleophile) is an active-site residue.

It belongs to the ArgJ family. In terms of assembly, heterotetramer of two alpha and two beta chains.

The protein resides in the cytoplasm. It catalyses the reaction N(2)-acetyl-L-ornithine + L-glutamate = N-acetyl-L-glutamate + L-ornithine. The enzyme catalyses L-glutamate + acetyl-CoA = N-acetyl-L-glutamate + CoA + H(+). The protein operates within amino-acid biosynthesis; L-arginine biosynthesis; L-ornithine and N-acetyl-L-glutamate from L-glutamate and N(2)-acetyl-L-ornithine (cyclic): step 1/1. It functions in the pathway amino-acid biosynthesis; L-arginine biosynthesis; N(2)-acetyl-L-ornithine from L-glutamate: step 1/4. Catalyzes two activities which are involved in the cyclic version of arginine biosynthesis: the synthesis of N-acetylglutamate from glutamate and acetyl-CoA as the acetyl donor, and of ornithine by transacetylation between N(2)-acetylornithine and glutamate. The polypeptide is Arginine biosynthesis bifunctional protein ArgJ (Staphylococcus aureus (strain Mu50 / ATCC 700699)).